The primary structure comprises 390 residues: Probable tRNA pseudouridine synthase D (390 aa).

The Nucleophile role is filled by Asp-93. One can recognise a TRUD domain in the interval 166 to 353 (YVLNYYGIQR…YGTRRKMITP (188 aa)).

Belongs to the pseudouridine synthase TruD family.

The enzyme catalyses uridine(13) in tRNA = pseudouridine(13) in tRNA. In terms of biological role, could be responsible for synthesis of pseudouridine from uracil-13 in transfer RNAs. This is Probable tRNA pseudouridine synthase D from Methanococcus maripaludis (strain C5 / ATCC BAA-1333).